Reading from the N-terminus, the 61-residue chain is Small ribosomal subunit protein uS14 (61 aa).

Positions 24, 27, 40, and 43 each coordinate Zn(2+).

It belongs to the universal ribosomal protein uS14 family. Zinc-binding uS14 subfamily. In terms of assembly, part of the 30S ribosomal subunit. Contacts proteins S3 and S10. Zn(2+) is required as a cofactor.

Functionally, binds 16S rRNA, required for the assembly of 30S particles and may also be responsible for determining the conformation of the 16S rRNA at the A site. The protein is Small ribosomal subunit protein uS14 of Mycobacterium sp. (strain JLS).